We begin with the raw amino-acid sequence, 494 residues long: Keratin, type I cytoskeletal 12 (494 aa).

A compositionally biased stretch (polar residues) spans 1 to 12 (MDLSNNTMSLSV). Residues 1–32 (MDLSNNTMSLSVRTPGLSRRLSSQSVIGRPRG) form a disordered region. A head region spans residues 1–124 (MDLSNNTMSL…GNDGGLLSGS (124 aa)). The tract at residues 125–160 (EKETMQNLNDRLASYLDKVRALEEANTELENKIREW) is coil 1A. The 316-residue stretch at 125-440 (EKETMQNLND…RLLDGEAQGD (316 aa)) folds into the IF rod domain. The tract at residues 164-182 (RGTGTADASQSDYSKYYPL) is linker 1. Residues 183 to 274 (IEDLRNKIIS…KNHEDELQSF (92 aa)) are coil 1B. Residues 275 to 297 (RVGGPGEVSVEMDAAPGVDLTRL) form a linker 12 region. The interval 298 to 435 (LNDMRAQYET…IETYRRLLDG (138 aa)) is coil 2. A tail region spans residues 436–494 (EAQGDGLEESLFVTDSKSQAQSTDSSKDPTKTRKIKTVVQEMVNGEVVSSQVQEIEELM). Positions 446-468 (LFVTDSKSQAQSTDSSKDPTKTR) are disordered. The span at 448-459 (VTDSKSQAQSTD) shows a compositional bias: polar residues.

Belongs to the intermediate filament family. In terms of assembly, heterotetramer of two type I and two type II keratins. Keratin-3 associates with keratin-12. In terms of tissue distribution, expressed in the corneal epithelium (at protein level).

Functionally, involved in corneal epithelium organization, integrity and corneal keratin expression. The chain is Keratin, type I cytoskeletal 12 (KRT12) from Homo sapiens (Human).